Here is a 152-residue protein sequence, read N- to C-terminus: Ribosome maturation factor RimP (152 aa).

This sequence belongs to the RimP family.

It is found in the cytoplasm. Required for maturation of 30S ribosomal subunits. This chain is Ribosome maturation factor RimP, found in Francisella tularensis subsp. tularensis (strain FSC 198).